We begin with the raw amino-acid sequence, 370 residues long: Phosphate-binding protein PstS 2 (370 aa).

The first 22 residues, 1-22 (MKFARSGAAVSLLAAGTLVLTA), serve as a signal peptide directing secretion. The N-palmitoyl cysteine moiety is linked to residue Cys-23. The S-diacylglycerol cysteine moiety is linked to residue Cys-23. Residues 54–56 (STA), Ser-84, Asp-102, and 191–193 (SGT) contribute to the phosphate site.

The protein belongs to the PstS family. The complex is composed of two ATP-binding proteins (PstB), two transmembrane proteins (PstC and PstA) and a solute-binding protein (PstS).

The protein resides in the cell membrane. In terms of biological role, functions in inorganic phosphate uptake, although probably not the main uptake protein under phosphate starvation. Part of the ABC transporter complex PstSACB involved in phosphate import. This Mycobacterium tuberculosis (strain ATCC 25618 / H37Rv) protein is Phosphate-binding protein PstS 2 (pstS2).